The primary structure comprises 177 residues: Thioredoxin M-type, chloroplastic (177 aa).

The N-terminal 64 residues, Met1–Cys64, are a transit peptide targeting the chloroplast. The region spanning Glu65–Gln177 is the Thioredoxin domain. Residues Cys101 and Cys104 each act as nucleophile in the active site. Cys101 and Cys104 form a disulfide bridge.

The protein belongs to the thioredoxin family. Plant M-type subfamily. Forms a complex with heterodimeric ferredoxin-thioredoxin reductase (FTR) and ferredoxin.

It is found in the plastid. The protein localises to the chloroplast. Functionally, participates in various redox reactions through the reversible oxidation of the active center dithiol to a disulfide. The M form is known to activate NADP-malate dehydrogenase. The polypeptide is Thioredoxin M-type, chloroplastic (Brassica napus (Rape)).